A 423-amino-acid chain; its full sequence is CinA-like protein (423 aa).

It belongs to the CinA family.

This is CinA-like protein from Chlorobium chlorochromatii (strain CaD3).